Here is a 436-residue protein sequence, read N- to C-terminus: Nicotinate phosphoribosyltransferase (436 aa).

Residue His-231 is modified to Phosphohistidine; by autocatalysis.

It belongs to the NAPRTase family. In terms of processing, transiently phosphorylated on a His residue during the reaction cycle. Phosphorylation strongly increases the affinity for substrates and increases the rate of nicotinate D-ribonucleotide production. Dephosphorylation regenerates the low-affinity form of the enzyme, leading to product release.

The catalysed reaction is nicotinate + 5-phospho-alpha-D-ribose 1-diphosphate + ATP + H2O = nicotinate beta-D-ribonucleotide + ADP + phosphate + diphosphate. The protein operates within cofactor biosynthesis; NAD(+) biosynthesis; nicotinate D-ribonucleotide from nicotinate: step 1/1. In terms of biological role, catalyzes the synthesis of beta-nicotinate D-ribonucleotide from nicotinate and 5-phospho-D-ribose 1-phosphate at the expense of ATP. In Vibrio parahaemolyticus serotype O3:K6 (strain RIMD 2210633), this protein is Nicotinate phosphoribosyltransferase.